A 264-amino-acid chain; its full sequence is Fructose-1,6-bisphosphatase/inositol-1-monophosphatase (264 aa).

The Mg(2+) site is built by glutamate 70, aspartate 86, leucine 88, and aspartate 89. Residues 89–91, arginine 185, and alanine 190 each bind substrate; that span reads DGT. Residue aspartate 214 coordinates Mg(2+).

The protein belongs to the inositol monophosphatase superfamily. FBPase class 4 family. It depends on Mg(2+) as a cofactor.

It carries out the reaction beta-D-fructose 1,6-bisphosphate + H2O = beta-D-fructose 6-phosphate + phosphate. It catalyses the reaction a myo-inositol phosphate + H2O = myo-inositol + phosphate. Phosphatase with broad specificity; it can dephosphorylate fructose 1,6-bisphosphate, and both D and L isomers of inositol-1-phosphate (I-1-P). This chain is Fructose-1,6-bisphosphatase/inositol-1-monophosphatase (suhB), found in Aquifex aeolicus (strain VF5).